Consider the following 438-residue polypeptide: Battenin (438 aa).

The segment at 1-25 (MGGCAGSRRRLSDSEGEETVPEPRL) is disordered. The Cytoplasmic portion of the chain corresponds to 1–37 (MGGCAGSRRRLSDSEGEETVPEPRLPLLDHQGAHWKN). Residues Ser-12 and Ser-14 each carry the phosphoserine modification. Residues 38-58 (AVGFWLLGLCNNFSYVVMLSA) traverse the membrane as a helical segment. Residues 59–127 (AHDILSHERT…GLHLLPYSPR (69 aa)) lie on the Lumenal side of the membrane. 2 N-linked (GlcNAc...) asparagine glycosylation sites follow: Asn-71 and Asn-85. Residues 128–148 (VLVSGICAAGSFVLVAFSHSV) traverse the membrane as a helical segment. At 149–151 (GTS) the chain is on the cytoplasmic side. A helical membrane pass occupies residues 152-172 (LCGVVLASISSGLGEVTFLSL). Over 173-182 (TAFYPRAVIS) the chain is Lumenal. The chain crosses the membrane as a helical span at residues 183–203 (WWSSGTGGAGLLGALSYLGLT). The Cytoplasmic segment spans residues 204-277 (QAGLSPQQTL…SLSLRERWTV (74 aa)). Residues 237-268 (QDPGGEEEAESSARQPLIRTEAPESKPGSSSS) form a disordered region. Positions 242–244 (EEE) match the Lysosomal targeting motif motif. A Lysosomal targeting motif. Required for AP1G1, AP2A2 and AP3D1 interaction motif is present at residues 253–254 (LI). A helical transmembrane segment spans residues 278–298 (FKGLLWYIVPLVVVYFAEYFI). Over 299–346 (NQGLFELLFFRNTSLSHAQQYRWYQMLYQAGVFASRSSLRCCHIRFTW) the chain is Lumenal. N-linked (GlcNAc...) asparagine glycosylation occurs at Asn-310. Residues 347–367 (ALALLQCLNLAFLLADVWFGF) form a helical membrane-spanning segment. The Cytoplasmic segment spans residues 368 to 438 (LLSIYFVFLI…PLHDFLCQLS (71 aa)). The Lysosomal targeting motif signature appears at 409–419 (MATTCISDTLG). Residue Cys-435 is modified to Cysteine methyl ester. A lipid anchor (S-farnesyl cysteine) is attached at Cys-435. The propeptide at 436-438 (QLS) is removed in mature form.

It belongs to the battenin family. As to quaternary structure, interacts with DCTN1, KIF3A, RAB7A and RILP. Interacts with CLN5. Post-translationally, highly glycosylated. Farnesylation is important for trafficking to lysosomes.

It localises to the lysosome membrane. Its subcellular location is the late endosome. The protein resides in the lysosome. In terms of biological role, mediates microtubule-dependent, anterograde transport connecting the Golgi network, endosomes, autophagosomes, lysosomes and plasma membrane, and participates in several cellular processes such as regulation of lysosomal pH, lysosome protein degradation, receptor-mediated endocytosis, autophagy, transport of proteins and lipids from the TGN, apoptosis and synaptic transmission. Facilitates the proteins transport from trans-Golgi network (TGN)-to other membrane compartments such as transport of microdomain-associated proteins to the plasma membrane, IGF2R transport to the lysosome where it regulates the CTSD release leading to regulation of CTSD maturation and thereby APP intracellular processing. Moreover regulates CTSD activity in response to osmotic stress. Also binds galactosylceramide and transports it from the trans Golgi to the rafts, which may have immediate and downstream effects on cell survival by modulating ceramide synthesis. At the plasma membrane, regulates actin-dependent events including filopodia formation, cell migration, and pinocytosis through ARF1-CDC42 pathway and also the cytoskeleton organization through interaction with MYH10 and fodrin leading to the regulation of the plasma membrane association of Na+, K+ ATPase complex. Regulates synaptic transmission in the amygdala, hippocampus, and cerebellum through regulation of synaptic vesicles density and their proximity to active zones leading to modulation of short-term plasticity and age-dependent anxious behavior, learning and memory. Regulates autophagic vacuoles (AVs) maturation by modulating the trafficking between endocytic and autophagolysosomal/lysosomal compartments, which involves vesicle fusion leading to regulation of degradation process. Also participates in cellular homeostasis of compounds such as, water, ions, amino acids, proteins and lipids in several tissue namely in brain and kidney through regulation of their transport and synthesis. This is Battenin from Macaca fascicularis (Crab-eating macaque).